The chain runs to 449 residues: Exodeoxyribonuclease 7 large subunit (449 aa).

The protein belongs to the XseA family. In terms of assembly, heterooligomer composed of large and small subunits.

It localises to the cytoplasm. It catalyses the reaction Exonucleolytic cleavage in either 5'- to 3'- or 3'- to 5'-direction to yield nucleoside 5'-phosphates.. Functionally, bidirectionally degrades single-stranded DNA into large acid-insoluble oligonucleotides, which are then degraded further into small acid-soluble oligonucleotides. This chain is Exodeoxyribonuclease 7 large subunit, found in Lacticaseibacillus paracasei (strain ATCC 334 / BCRC 17002 / CCUG 31169 / CIP 107868 / KCTC 3260 / NRRL B-441) (Lactobacillus paracasei).